The chain runs to 429 residues: Adenylosuccinate synthetase (429 aa).

GTP is bound by residues 12-18 (GDEGKGK) and 40-42 (GHT). Residue aspartate 13 is the Proton acceptor of the active site. 2 residues coordinate Mg(2+): aspartate 13 and glycine 40. Residues 13–16 (DEGK), 38–41 (NAGH), threonine 128, arginine 142, glutamine 223, threonine 238, and arginine 302 contribute to the IMP site. Histidine 41 (proton donor) is an active-site residue. 298–304 (TVTGRPR) contacts substrate. Residues arginine 304, 330-332 (LLD), and 412-414 (SVG) each bind GTP.

The protein belongs to the adenylosuccinate synthetase family. In terms of assembly, homodimer. Requires Mg(2+) as cofactor.

The protein localises to the cytoplasm. It catalyses the reaction IMP + L-aspartate + GTP = N(6)-(1,2-dicarboxyethyl)-AMP + GDP + phosphate + 2 H(+). It participates in purine metabolism; AMP biosynthesis via de novo pathway; AMP from IMP: step 1/2. In terms of biological role, plays an important role in the de novo pathway of purine nucleotide biosynthesis. Catalyzes the first committed step in the biosynthesis of AMP from IMP. In Lactobacillus gasseri (strain ATCC 33323 / DSM 20243 / BCRC 14619 / CIP 102991 / JCM 1131 / KCTC 3163 / NCIMB 11718 / NCTC 13722 / AM63), this protein is Adenylosuccinate synthetase.